The chain runs to 62 residues: Photosystem II reaction center protein Z (62 aa).

Helical transmembrane passes span 8–28 (LVLL…VVLA) and 41–61 (YTGA…NSLV).

Belongs to the PsbZ family. In terms of assembly, PSII is composed of 1 copy each of membrane proteins PsbA, PsbB, PsbC, PsbD, PsbE, PsbF, PsbH, PsbI, PsbJ, PsbK, PsbL, PsbM, PsbT, PsbX, PsbY, PsbZ, Psb30/Ycf12, at least 3 peripheral proteins of the oxygen-evolving complex and a large number of cofactors. It forms dimeric complexes.

It localises to the plastid. The protein resides in the chloroplast thylakoid membrane. Its function is as follows. May control the interaction of photosystem II (PSII) cores with the light-harvesting antenna, regulates electron flow through the 2 photosystem reaction centers. PSII is a light-driven water plastoquinone oxidoreductase, using light energy to abstract electrons from H(2)O, generating a proton gradient subsequently used for ATP formation. The chain is Photosystem II reaction center protein Z from Porphyra purpurea (Red seaweed).